A 197-amino-acid polypeptide reads, in one-letter code: HTH-type transcriptional regulator BetI (197 aa).

Residues 8–68 (PIRRQQLIEA…ATMGYIMSML (61 aa)) form the HTH tetR-type domain. The segment at residues 31-50 (SIALIARLAGVSNGIISHYF) is a DNA-binding region (H-T-H motif).

The protein operates within amine and polyamine biosynthesis; betaine biosynthesis via choline pathway [regulation]. In terms of biological role, repressor involved in the biosynthesis of the osmoprotectant glycine betaine. It represses transcription of the choline transporter BetT and the genes of BetAB involved in the synthesis of glycine betaine. The protein is HTH-type transcriptional regulator BetI of Pseudomonas fluorescens (strain ATCC BAA-477 / NRRL B-23932 / Pf-5).